A 334-amino-acid polypeptide reads, in one-letter code: N-acetyl-gamma-glutamyl-phosphate reductase (334 aa).

Residue Cys-154 is part of the active site.

The protein belongs to the NAGSA dehydrogenase family. Type 1 subfamily.

It localises to the cytoplasm. It catalyses the reaction N-acetyl-L-glutamate 5-semialdehyde + phosphate + NADP(+) = N-acetyl-L-glutamyl 5-phosphate + NADPH + H(+). It participates in amino-acid biosynthesis; L-arginine biosynthesis; N(2)-acetyl-L-ornithine from L-glutamate: step 3/4. In terms of biological role, catalyzes the NADPH-dependent reduction of N-acetyl-5-glutamyl phosphate to yield N-acetyl-L-glutamate 5-semialdehyde. The sequence is that of N-acetyl-gamma-glutamyl-phosphate reductase from Buchnera aphidicola subsp. Acyrthosiphon pisum (strain 5A).